The following is a 380-amino-acid chain: Queuine tRNA-ribosyltransferase (380 aa).

The active-site Proton acceptor is Asp95. Substrate-binding positions include 95–99 (DSGGF), Asp149, Gln192, and Gly219. The segment at 250–256 (GVGSPDS) is RNA binding. Asp269 (nucleophile) is an active-site residue. An RNA binding; important for wobble base 34 recognition region spans residues 274–278 (TRIGR). Zn(2+) is bound by residues Cys307, Cys309, Cys312, and His338.

It belongs to the queuine tRNA-ribosyltransferase family. Homodimer. Within each dimer, one monomer is responsible for RNA recognition and catalysis, while the other monomer binds to the replacement base PreQ1. It depends on Zn(2+) as a cofactor.

It carries out the reaction 7-aminomethyl-7-carbaguanine + guanosine(34) in tRNA = 7-aminomethyl-7-carbaguanosine(34) in tRNA + guanine. Its pathway is tRNA modification; tRNA-queuosine biosynthesis. In terms of biological role, catalyzes the base-exchange of a guanine (G) residue with the queuine precursor 7-aminomethyl-7-deazaguanine (PreQ1) at position 34 (anticodon wobble position) in tRNAs with GU(N) anticodons (tRNA-Asp, -Asn, -His and -Tyr). Catalysis occurs through a double-displacement mechanism. The nucleophile active site attacks the C1' of nucleotide 34 to detach the guanine base from the RNA, forming a covalent enzyme-RNA intermediate. The proton acceptor active site deprotonates the incoming PreQ1, allowing a nucleophilic attack on the C1' of the ribose to form the product. After dissociation, two additional enzymatic reactions on the tRNA convert PreQ1 to queuine (Q), resulting in the hypermodified nucleoside queuosine (7-(((4,5-cis-dihydroxy-2-cyclopenten-1-yl)amino)methyl)-7-deazaguanosine). This chain is Queuine tRNA-ribosyltransferase, found in Geobacillus thermodenitrificans (strain NG80-2).